The chain runs to 364 residues: MAIVKEITADLIKKSGEKISAGQSTKSEVGTKTYTAQFPTGRASGNDTTEDFQVTDLYKNGLLFTAYNMSSRDSGSLRSMRSNYSSSSSSILRTARNTISSTVSKLSNGLISNNNSGTISKSPIANILLPRSKSDVDTSSHRFNDVQESLISRGGGTATGVLSNIASTAVFGALESITQGIMADNNEQIYTTARSMYGGAENRTKVFTWDLTPRSTEDLMAIINIYQYFNYFSYGETGKSQYAAEIKGYLDDWYRSTLIEPLSPEDAAKNKTLFEKMTSSLTNVLVVSNPTVWMVKNFGATSKFDGKTEIFGPCQIQSIRFDKTPNGNFNGLAIAPNLPSTFTLEITMREIITLNRASLYAGTF.

Homohexamer. The tube first annulus is composed of a gp48 hexameric ring. Interacts with gp54. Part of the baseplate macromolecular complex which consists of gp5, gp5.4, gp27 (central spike complex); gp6, gp25, gp53 (inner baseplate); gp7, gp8 (intermediate baseplate); gp9, gp10, gp11, gp12 (peripheral); gp48 and gp54 (proximal region of the tail tube).

Its subcellular location is the virion. Functionally, baseplate protein that forms, together with gp54, the baseplate-tail tube junction. The tail tube first 2 annuli are formed by gp48 and gp54, which are in continuation of the spike complex. Involved in the tail assembly. Morphogenesis of the baseplate is completed by association of gp48 and gp54, which bind the upper part of the baseplate dome to form the platform for polymerization of the tail tube. The chain is Baseplate tail-tube junction protein gp48 (48) from Escherichia coli (Bacteriophage T4).